The chain runs to 429 residues: [LysW]-aminoadipate semialdehyde transaminase (429 aa).

Residues 112–113 (GT) and phenylalanine 139 contribute to the pyridoxal 5'-phosphate site. Arginine 142 contacts substrate. 226-229 (DEIQ) serves as a coordination point for pyridoxal 5'-phosphate. Position 255 is an N6-(pyridoxal phosphate)lysine (lysine 255). Residue threonine 283 coordinates substrate. A pyridoxal 5'-phosphate-binding site is contributed by threonine 284. The tract at residues 408 to 429 (LRAQQSEMGQQQVSQGESVQTE) is disordered. A compositionally biased stretch (low complexity) spans 411–429 (QQSEMGQQQVSQGESVQTE).

This sequence belongs to the class-III pyridoxal-phosphate-dependent aminotransferase family. LysJ subfamily. As to quaternary structure, homodimer. Requires pyridoxal 5'-phosphate as cofactor.

The protein localises to the cytoplasm. The enzyme catalyses [amino-group carrier protein]-C-terminal-gamma-(L-lysyl)-L-glutamate + 2-oxoglutarate = [amino-group carrier protein]-C-terminal-N-(1-carboxy-5-oxopentan-1-yl)-L-glutamine + L-glutamate. It participates in amino-acid biosynthesis; L-lysine biosynthesis via AAA pathway; L-lysine from L-alpha-aminoadipate (Thermus route): step 4/5. Its function is as follows. Catalyzes the transfer of the amino group of L-glutamate to [LysW]-aminoadipate 6-semialdehyde, generating [LysW]-gamma-L-lysine. This Deinococcus radiodurans (strain ATCC 13939 / DSM 20539 / JCM 16871 / CCUG 27074 / LMG 4051 / NBRC 15346 / NCIMB 9279 / VKM B-1422 / R1) protein is [LysW]-aminoadipate semialdehyde transaminase.